We begin with the raw amino-acid sequence, 492 residues long: Protein nucleotidyltransferase YdiU (492 aa).

The ATP site is built by Gly-91, Gly-93, Arg-94, Lys-114, Asp-126, Gly-127, Arg-180, and Arg-187. Asp-256 serves as the catalytic Proton acceptor. Asn-257 and Asp-266 together coordinate Mg(2+). An ATP-binding site is contributed by Asp-266.

It belongs to the SELO family. Requires Mg(2+) as cofactor. It depends on Mn(2+) as a cofactor.

It carries out the reaction L-seryl-[protein] + ATP = 3-O-(5'-adenylyl)-L-seryl-[protein] + diphosphate. It catalyses the reaction L-threonyl-[protein] + ATP = 3-O-(5'-adenylyl)-L-threonyl-[protein] + diphosphate. The catalysed reaction is L-tyrosyl-[protein] + ATP = O-(5'-adenylyl)-L-tyrosyl-[protein] + diphosphate. The enzyme catalyses L-histidyl-[protein] + UTP = N(tele)-(5'-uridylyl)-L-histidyl-[protein] + diphosphate. It carries out the reaction L-seryl-[protein] + UTP = O-(5'-uridylyl)-L-seryl-[protein] + diphosphate. It catalyses the reaction L-tyrosyl-[protein] + UTP = O-(5'-uridylyl)-L-tyrosyl-[protein] + diphosphate. In terms of biological role, nucleotidyltransferase involved in the post-translational modification of proteins. It can catalyze the addition of adenosine monophosphate (AMP) or uridine monophosphate (UMP) to a protein, resulting in modifications known as AMPylation and UMPylation. In Synechococcus sp. (strain ATCC 27144 / PCC 6301 / SAUG 1402/1) (Anacystis nidulans), this protein is Protein nucleotidyltransferase YdiU.